Reading from the N-terminus, the 300-residue chain is Small ribosomal subunit protein uS2 (300 aa).

The disordered stretch occupies residues 278–300 (GEAQTGNEGWGTEAAAPAATTQW).

The protein belongs to the universal ribosomal protein uS2 family. In terms of assembly, component of the small ribosomal subunit. Mature ribosomes consist of a small (40S) and a large (60S) subunit. The 40S subunit contains about 33 different proteins and 1 molecule of RNA (18S). The 60S subunit contains about 49 different proteins and 3 molecules of RNA (25S, 5.8S and 5S). Interacts with rps21.

The protein resides in the cytoplasm. Required for the assembly and/or stability of the 40S ribosomal subunit. Required for the processing of the 20S rRNA-precursor to mature 18S rRNA in a late step of the maturation of 40S ribosomal subunits. The protein is Small ribosomal subunit protein uS2 (rps0) of Pyrenophora tritici-repentis (strain Pt-1C-BFP) (Wheat tan spot fungus).